The chain runs to 803 residues: Mastermind-like domain-containing protein 1 (803 aa).

Disordered stretches follow at residues 22–50 (NRQE…TGMA), 292–374 (LAAS…APSS), 420–452 (GHLI…QQSF), and 486–641 (QQQQ…PDQS). Over residues 296-309 (KQGSATKQGSNRNW) the composition is skewed to polar residues. Positions 312–340 (LPPPGLSPPYLPVPSPHPPPPQPPPPPFS) are enriched in pro residues. Residues 347 to 362 (SCMSSSSLSGSAVQSS) are compositionally biased toward low complexity. 4 stretches are compositionally biased toward polar residues: residues 363 to 374 (PNALLSSMAPSS), 441 to 452 (NLSSPGLPQQSF), 495 to 526 (HQAN…SSSP), and 547 to 564 (PSPQ…QSSL). Low complexity predominate over residues 571-588 (ATPAHAPSATASSTATAT). Positions 592–622 (QHHHQQHHHQQHHHQQQHHQQQHHQQHHHQQ) are enriched in basic residues. A compositionally biased stretch (low complexity) spans 623–641 (QQHQQQQHQQQQQQQPDQS).

The protein belongs to the mastermind family.

It is found in the nucleus. In terms of biological role, transactivates the HES3 promoter independently of NOTCH proteins. HES3 is a non-canonical NOTCH target gene which lacks binding sites for RBPJ. Required for testosterone production. The sequence is that of Mastermind-like domain-containing protein 1 (Mamld1) from Mus musculus (Mouse).